Here is a 334-residue protein sequence, read N- to C-terminus: Nucleoid-associated protein PMI0825 (334 aa).

This sequence belongs to the YejK family.

It localises to the cytoplasm. The protein resides in the nucleoid. This is Nucleoid-associated protein PMI0825 from Proteus mirabilis (strain HI4320).